Consider the following 101-residue polypeptide: CRISPR-associated endoribonuclease Cas2 (101 aa).

Aspartate 8 is a binding site for Mg(2+).

It belongs to the CRISPR-associated endoribonuclease Cas2 protein family. As to quaternary structure, homodimer, forms a heterotetramer with a Cas1 homodimer. The cofactor is Mg(2+).

Functionally, CRISPR (clustered regularly interspaced short palindromic repeat), is an adaptive immune system that provides protection against mobile genetic elements (viruses, transposable elements and conjugative plasmids). CRISPR clusters contain sequences complementary to antecedent mobile elements and target invading nucleic acids. CRISPR clusters are transcribed and processed into CRISPR RNA (crRNA). Functions as a ssRNA-specific endoribonuclease. Involved in the integration of spacer DNA into the CRISPR cassette. This chain is CRISPR-associated endoribonuclease Cas2, found in Ligilactobacillus salivarius (strain UCC118) (Lactobacillus salivarius).